The primary structure comprises 635 residues: Threonine--tRNA ligase (635 aa).

One can recognise a TGS domain in the interval 1-61 (MVSIRLPDGS…DRDASLAIVT (61 aa)). Residues 242-533 (DHRKLGKQLD…LIEHHAGAMP (292 aa)) are catalytic. Cys-333, His-384, and His-510 together coordinate Zn(2+).

The protein belongs to the class-II aminoacyl-tRNA synthetase family. In terms of assembly, homodimer. Requires Zn(2+) as cofactor.

The protein localises to the cytoplasm. It catalyses the reaction tRNA(Thr) + L-threonine + ATP = L-threonyl-tRNA(Thr) + AMP + diphosphate + H(+). Its function is as follows. Catalyzes the attachment of threonine to tRNA(Thr) in a two-step reaction: L-threonine is first activated by ATP to form Thr-AMP and then transferred to the acceptor end of tRNA(Thr). Also edits incorrectly charged L-seryl-tRNA(Thr). This chain is Threonine--tRNA ligase, found in Burkholderia vietnamiensis (strain G4 / LMG 22486) (Burkholderia cepacia (strain R1808)).